A 66-amino-acid chain; its full sequence is Large ribosomal subunit protein bL33c (66 aa).

This sequence belongs to the bacterial ribosomal protein bL33 family.

Its subcellular location is the plastid. It is found in the chloroplast. This is Large ribosomal subunit protein bL33c from Liriodendron tulipifera (Tuliptree).